A 935-amino-acid chain; its full sequence is MSDYKDTLNLPKTSFSMKGNLANKEPMILNKWEKQGIYKKIREHFAGREKFVLHDGPPYANGSIHVGHAVNKILKDIIIKSKTLSGYDAPFTPTWDCHGLPIELQVEKKHGKAGQSISEDDFRKECRKYAKKQVEIQKKDFKRLGVLGDWEQPYLTINFDYEANMIRTLAKIIENGHLSKGFKPVHWCTDCGSALAEAEVEYADKVSPAIDVKFKIKDKDKLAQAFGLDSLNHDAFAIIWTTTPWTLPANQAIAVNNQLNYSLIKIEDFYIILAENLVEQTLKRYAIENAQIIATTTGNKLTGIIAEHPFYSRHVPILHGDHVTDDSGTGLVHTAPTHGVDDFTLGKEHNLSMEIFVKGNGCYSENTKLFAGEFIFKANDRIIELLGEKKRLMNSDKIKHSYPHCWRHKTPLMFRATPQWFISMEKQGLRDKALQAIKETSWAPSWGQARIEGMVKDRPDWCISRQRTWGVPLPLFIHKETEELHPNTIEILHKVAEKIEKDGIEAWFNADDCEFITETAQYKSVKDTLDVWFDSGSSSMCILDLDKRLSYPADLYLEGSDQHRGWFQTSLLVAMSAKGSQPYKEVFTHGFVVDEHGRKMSKSLGNVTSPQDIYNTLGADILRLWTASTDYKSEMAVSDQILKRTADTYRRLRNTARFLLSNLDGFNPVTDIIEFDKLVKLDQWAIAKTKEFQDKIIEAYDKYQTHTVAQLIHHFCSIEMGSFYLDIIKDRQYTAKTDGHPRKSAQTAIYHIVHALVRWMAPILSFTANEIWDATPKTTDLPIQLCEWYTGLKSFDQDAELDLEYWAKIQEIRSEVNRVLEIKRNEDVIKASLEAEITIYADKYNYKLLEKLGNELRFLLISSKADLKVIEESTSSSIAANIPGLLIEITKIEEPKCERCWHRSSTVGDNPQYKDICSRCVENITTEAGESREFA.

Residues 58 to 68 (PYANGSIHVGH) carry the 'HIGH' region motif. Glu558 provides a ligand contact to L-isoleucyl-5'-AMP. The 'KMSKS' region signature appears at 599 to 603 (KMSKS). Lys602 provides a ligand contact to ATP. Residues Cys897, Cys900, Cys917, and Cys920 each coordinate Zn(2+).

This sequence belongs to the class-I aminoacyl-tRNA synthetase family. IleS type 1 subfamily. As to quaternary structure, monomer. Zn(2+) is required as a cofactor.

It is found in the cytoplasm. It carries out the reaction tRNA(Ile) + L-isoleucine + ATP = L-isoleucyl-tRNA(Ile) + AMP + diphosphate. Its function is as follows. Catalyzes the attachment of isoleucine to tRNA(Ile). As IleRS can inadvertently accommodate and process structurally similar amino acids such as valine, to avoid such errors it has two additional distinct tRNA(Ile)-dependent editing activities. One activity is designated as 'pretransfer' editing and involves the hydrolysis of activated Val-AMP. The other activity is designated 'posttransfer' editing and involves deacylation of mischarged Val-tRNA(Ile). The polypeptide is Isoleucine--tRNA ligase (Francisella tularensis subsp. tularensis (strain WY96-3418)).